The chain runs to 346 residues: MSCVSQSAGSLPPLCQWSGLEPICKIPPSQQFQQIHCPLITKHRSSKLCDLLPPGVTDSIYDFLANLPIILLFVASVPARFIYCIVYNFLLNFDQFILGIEYSIINPILDFFTAPLVYLAVGLTDGENNSAFSPPYLIGVLTDACLPGIVSGIYQAIGDIFYTIGYGIGFILGLFIDLYDIILYSICTLVTFGLTFGLCLSYDIVGIFKGAGGLKFTIYPFSFLAGLLQNYINCGCVLGSYPTAYIILCLNFGGSCPSCCPCGVGFTPPACPAIPNGTPPSPVNLSVTGQGCVSEYPHSENGSGGSGGSGSGSGSGGSGSGGNSGSGGSGSGSSGSGGNSGSGNNG.

Transmembrane regions (helical) follow at residues 67–87 (LPIILLFVASVPARFIYCIVY), 104–124 (IINPILDFFTAPLVYLAVGLT), 134–154 (PPYLIGVLTDACLPGIVSGIY), 156–176 (AIGDIFYTIGYGIGFILGLFI), 181–201 (IILYSICTLVTFGLTFGLCLS), and 219–241 (YPFSFLAGLLQNYINCGCVLGSY). The segment at 294–346 (SEYPHSENGSGGSGGSGSGSGSGGSGSGGNSGSGGSGSGSSGSGGNSGSGNNG) is disordered. Positions 302-346 (GSGGSGGSGSGSGSGGSGSGGNSGSGGSGSGSSGSGGNSGSGNNG) are enriched in gly residues.

The protein localises to the host membrane. This is Putative transmembrane protein ORF346 from Acidianus bottle-shaped virus (isolate Italy/Pozzuoli) (ABV).